The sequence spans 470 residues: 1-aminocyclopropane-1-carboxylate synthase 5 (470 aa).

Residues Glu47 and Tyr85 each contribute to the substrate site. At Lys272 the chain carries N6-(pyridoxal phosphate)lysine. Ser461 carries the post-translational modification Phosphoserine.

It belongs to the class-I pyridoxal-phosphate-dependent aminotransferase family. As to quaternary structure, homodimer and heterodimer. In vivo, the relevance of heterodimerization with other ACS enzymes is however unsure. Interacts (via its C-terminal region) with FEI1, FEI2, ETO1, EOL1 and EOL2. Interacts with GRF3. Requires pyridoxal 5'-phosphate as cofactor. Post-translationally, may be processed at its C-terminus. In terms of processing, ubiquitinated. The interaction with ETO1 (and possibly EOL1 and EOL2) mediate its proteasome-dependent degradation. Its stability and degradation plays a central role in ethylene biosynthesis. In terms of tissue distribution, expressed in roots and siliques.

It carries out the reaction S-adenosyl-L-methionine = 1-aminocyclopropane-1-carboxylate + S-methyl-5'-thioadenosine + H(+). Its pathway is alkene biosynthesis; ethylene biosynthesis via S-adenosyl-L-methionine; ethylene from S-adenosyl-L-methionine: step 1/2. Functionally, 1-aminocyclopropane-1-carboxylate synthase (ACS) enzymes catalyze the conversion of S-adenosyl-L-methionine (SAM) into 1-aminocyclopropane-1-carboxylate (ACC), a direct precursor of ethylene. The chain is 1-aminocyclopropane-1-carboxylate synthase 5 (ACS5) from Arabidopsis thaliana (Mouse-ear cress).